Here is a 281-residue protein sequence, read N- to C-terminus: Secretory carrier-associated membrane protein 5 (281 aa).

Residues 1-49 (MHHDPNPFDEGADDNPFSNGGGGGARRGGGGGGGGGGGGGKSQFSFGFG) form a disordered region. Residues 1–139 (MHHDPNPFDE…AQKLQYLAFA (139 aa)) are Cytoplasmic-facing. Positions 19–49 (NGGGGGARRGGGGGGGGGGGGGKSQFSFGFG) are enriched in gly residues. A coiled-coil region spans residues 76 to 102 (KELLQWEADLKRREADIRRREEALKSA). 4 consecutive transmembrane segments (helical) span residues 140-160 (SWLG…VCWI), 167-187 (LFFL…LMWY), 202-222 (FGWF…AAIA), and 250-270 (IFYF…IWVL). The Cytoplasmic segment spans residues 271 to 281 (QKVYMYFRGHK).

It belongs to the SCAMP family.

The protein resides in the cell membrane. Its subcellular location is the cytoplasmic vesicle. The protein localises to the secretory vesicle membrane. Functionally, probably involved in membrane trafficking. In Oryza sativa subsp. japonica (Rice), this protein is Secretory carrier-associated membrane protein 5 (SCAMP5).